The primary structure comprises 151 residues: Macrodomain Ter protein (151 aa).

The protein belongs to the MatP family. Homodimer.

The protein resides in the cytoplasm. In terms of biological role, required for spatial organization of the terminus region of the chromosome (Ter macrodomain) during the cell cycle. Prevents early segregation of duplicated Ter macrodomains during cell division. Binds specifically to matS, which is a 13 bp signature motif repeated within the Ter macrodomain. This Yersinia enterocolitica serotype O:8 / biotype 1B (strain NCTC 13174 / 8081) protein is Macrodomain Ter protein.